The following is a 220-amino-acid chain: Antistasin (220 aa).

The first 19 residues, 1–19 (MNYLFVFLALSAAVTFANA), serve as a signal peptide directing secretion. Antistasin-like domains lie at 21–46 (CNKI…ICKC), 54–79 (CSNR…ICRC), 91–117 (CDGL…KCEC), 120–145 (CKQF…TCKC), 154–180 (CDDL…KCEC), and 183–208 (CKNF…TCKC).

This sequence belongs to the protease inhibitor I15 (antistasin) family. As to expression, gland cells. It is more strongly expressed in the head than in the gastric tissue.

Its subcellular location is the secreted. Functionally, this highly disulfide-bonded protein is a potent inhibitor of factor Xa. Facilitates digestion of tissues and may also protect the gastric tissues from its own digestive enzymes. May have therapeutic utility as an anticoagulant. Also exhibits a strong metastatic activity. In Hydra vulgaris (Hydra), this protein is Antistasin.